A 162-amino-acid chain; its full sequence is RNA pyrophosphohydrolase (162 aa).

The region spanning E7–E149 is the Nudix hydrolase domain. Positions G40 to G61 match the Nudix box motif.

It belongs to the Nudix hydrolase family. RppH subfamily. The cofactor is a divalent metal cation.

Its function is as follows. Accelerates the degradation of transcripts by removing pyrophosphate from the 5'-end of triphosphorylated RNA, leading to a more labile monophosphorylated state that can stimulate subsequent ribonuclease cleavage. The protein is RNA pyrophosphohydrolase of Wolbachia pipientis subsp. Culex pipiens (strain wPip).